A 266-amino-acid chain; its full sequence is Putative carbamate hydrolase RutD (266 aa).

An AB hydrolase-1 domain is found at 14–116 (PVVVLISGLG…VLVSVNGWLR (103 aa)).

The protein belongs to the AB hydrolase superfamily. Hydrolase RutD family.

It catalyses the reaction carbamate + 2 H(+) = NH4(+) + CO2. Its function is as follows. Involved in pyrimidine catabolism. May facilitate the hydrolysis of carbamate, a reaction that can also occur spontaneously. This Escherichia coli O81 (strain ED1a) protein is Putative carbamate hydrolase RutD.